Here is an 898-residue protein sequence, read N- to C-terminus: Translation initiation factor IF-2 (898 aa).

The segment at K51–S302 is disordered. Basic and acidic residues-rich tracts occupy residues S100–T164 and R171–V230. Over residues Q234–R245 the composition is skewed to polar residues. Positions R263–M273 are enriched in basic residues. Residues S274–P286 are compositionally biased toward basic and acidic residues. Positions R287–I297 are enriched in basic residues. One can recognise a tr-type G domain in the interval S397 to K566. Residues G406 to T413 are G1. G406–T413 lines the GTP pocket. The interval G431–H435 is G2. Residues D452–G455 form a G3 region. Residues D452–H456 and N506–D509 contribute to the GTP site. The tract at residues N506–D509 is G4. The interval S542–K544 is G5.

Belongs to the TRAFAC class translation factor GTPase superfamily. Classic translation factor GTPase family. IF-2 subfamily.

The protein localises to the cytoplasm. Functionally, one of the essential components for the initiation of protein synthesis. Protects formylmethionyl-tRNA from spontaneous hydrolysis and promotes its binding to the 30S ribosomal subunits. Also involved in the hydrolysis of GTP during the formation of the 70S ribosomal complex. The protein is Translation initiation factor IF-2 of Vibrio cholerae serotype O1 (strain ATCC 39541 / Classical Ogawa 395 / O395).